We begin with the raw amino-acid sequence, 195 residues long: PRS fimbrial minor pilin protein (195 aa).

An N-terminal signal peptide occupies residues 1–22 (MRLRFSVPLFFFGCVFVHGVFA). Cysteines 58 and 97 form a disulfide.

This sequence belongs to the fimbrial protein family.

It localises to the secreted. The protein localises to the fimbrium. Its function is as follows. Fimbriae (also called pili), polar filaments radiating from the surface of the bacterium to a length of 0.5-1.5 micrometers and numbering 100-300 per cell, enable bacteria to colonize the epithelium of specific host organs. Functionally, seems to anchor the pilus to the bacterial cell. In addition the stoichiometric relationship between PrsH and PrsA determines the pilus length. This chain is PRS fimbrial minor pilin protein (prsH), found in Escherichia coli.